A 981-amino-acid chain; its full sequence is Isoleucine--tRNA ligase (981 aa).

The 'HIGH' region motif lies at 50 to 60 (PTTNGMPHVGH). The 'KMSKS' region motif lies at 604 to 608 (KMSKS). Lysine 607 serves as a coordination point for ATP.

Belongs to the class-I aminoacyl-tRNA synthetase family. IleS type 2 subfamily. In terms of assembly, monomer. It depends on Zn(2+) as a cofactor.

Its subcellular location is the cytoplasm. It catalyses the reaction tRNA(Ile) + L-isoleucine + ATP = L-isoleucyl-tRNA(Ile) + AMP + diphosphate. Its function is as follows. Catalyzes the attachment of isoleucine to tRNA(Ile). As IleRS can inadvertently accommodate and process structurally similar amino acids such as valine, to avoid such errors it has two additional distinct tRNA(Ile)-dependent editing activities. One activity is designated as 'pretransfer' editing and involves the hydrolysis of activated Val-AMP. The other activity is designated 'posttransfer' editing and involves deacylation of mischarged Val-tRNA(Ile). The sequence is that of Isoleucine--tRNA ligase from Pyrobaculum aerophilum (strain ATCC 51768 / DSM 7523 / JCM 9630 / CIP 104966 / NBRC 100827 / IM2).